An 827-amino-acid polypeptide reads, in one-letter code: Protein Jade-1 (827 aa).

Residues 1 to 35 form a disordered region; it reads MKRVCLPSSSEDSDDNGSLSTSWSQHSRSLPSFRH. Polar residues predominate over residues 16 to 30; sequence NGSLSTSWSQHSRSL. Residues 200 to 250 form a PHD-type 1 zinc finger; it reads DVVCDVCQSPDGEDGNEMVFCDKCNICVHQACYGILKVPEGSWLCRTCALG. A C2HC pre-PHD-type zinc finger spans residues 252-286; it reads QPKCLLCPKKGGAMKPTRSGTKWVHVSCALWIPEV. The segment at 310–366 adopts a PHD-type 2 zinc-finger fold; that stretch reads LLCSLCNEKVGACIQCSIKNCRTAFHVTCAFDHGLEMKTILTQEDEVKFKSYCPKHG. 2 disordered regions span residues 622–705 and 769–810; these read TVAK…SSSL and RTKE…SSSS. Composition is skewed to basic and acidic residues over residues 646 to 661 and 669 to 682; these read SRTQGDTKFDSKEKPL and KHTEPPERPAEKKR. A compositionally biased stretch (polar residues) spans 692–705; the sequence is ATASSNKKQCSSSL.

It belongs to the JADE family. As to quaternary structure, component of the HBO1 complex composed.

Its subcellular location is the nucleus. It is found in the chromosome. The protein localises to the cytoplasm. The protein resides in the cytoskeleton. It localises to the cilium basal body. In terms of biological role, scaffold subunit of some HBO1 complexes, which have a histone H4 acetyltransferase activity. Plays a key role in HBO1 complex by directing KAT7/HBO1 specificity towards histone H4 acetylation (H4K5ac, H4K8ac and H4K12ac), regulating DNA replication initiation, regulating DNA replication initiation. The chain is Protein Jade-1 (jade1) from Xenopus laevis (African clawed frog).